Consider the following 343-residue polypeptide: Dihydroorotase (343 aa).

Zn(2+)-binding residues include histidine 13 and histidine 15. Substrate contacts are provided by residues 15–17 and asparagine 41; that span reads HLR. Lysine 99, histidine 136, and histidine 174 together coordinate Zn(2+). The residue at position 99 (lysine 99) is an N6-carboxylysine. Histidine 136 serves as a coordination point for substrate. Leucine 219 is a substrate binding site. Residue aspartate 247 coordinates Zn(2+). Aspartate 247 is a catalytic residue. Residues histidine 251 and alanine 263 each coordinate substrate.

This sequence belongs to the metallo-dependent hydrolases superfamily. DHOase family. Class II DHOase subfamily. As to quaternary structure, homodimer. Zn(2+) serves as cofactor.

The enzyme catalyses (S)-dihydroorotate + H2O = N-carbamoyl-L-aspartate + H(+). It functions in the pathway pyrimidine metabolism; UMP biosynthesis via de novo pathway; (S)-dihydroorotate from bicarbonate: step 3/3. Functionally, catalyzes the reversible cyclization of carbamoyl aspartate to dihydroorotate. The polypeptide is Dihydroorotase (Shewanella sp. (strain ANA-3)).